A 143-amino-acid chain; its full sequence is Ribosome maturation factor RimP (143 aa).

This sequence belongs to the RimP family.

Its subcellular location is the cytoplasm. Functionally, required for maturation of 30S ribosomal subunits. The sequence is that of Ribosome maturation factor RimP from Borrelia recurrentis (strain A1).